Reading from the N-terminus, the 53-residue chain is ATP synthase protein 8 (53 aa).

Residues 9 to 29 (WIFFLFFFICIFLIFNIMNYF) form a helical membrane-spanning segment.

The protein belongs to the ATPase protein 8 family. As to quaternary structure, F-type ATPases have 2 components, CF(1) - the catalytic core - and CF(0) - the membrane proton channel.

The protein localises to the mitochondrion membrane. Mitochondrial membrane ATP synthase (F(1)F(0) ATP synthase or Complex V) produces ATP from ADP in the presence of a proton gradient across the membrane which is generated by electron transport complexes of the respiratory chain. F-type ATPases consist of two structural domains, F(1) - containing the extramembraneous catalytic core and F(0) - containing the membrane proton channel, linked together by a central stalk and a peripheral stalk. During catalysis, ATP synthesis in the catalytic domain of F(1) is coupled via a rotary mechanism of the central stalk subunits to proton translocation. Part of the complex F(0) domain. Minor subunit located with subunit a in the membrane. This Bombyx mori (Silk moth) protein is ATP synthase protein 8 (mt:ATPase8).